The following is a 309-amino-acid chain: Probable 3-hydroxyacyl-CoA dehydrogenase B0272.3 (309 aa).

The protein belongs to the 3-hydroxyacyl-CoA dehydrogenase family. In terms of assembly, homodimer.

It localises to the mitochondrion matrix. It carries out the reaction a (3S)-3-hydroxyacyl-CoA + NAD(+) = a 3-oxoacyl-CoA + NADH + H(+). It functions in the pathway lipid metabolism; fatty acid beta-oxidation. In Caenorhabditis elegans, this protein is Probable 3-hydroxyacyl-CoA dehydrogenase B0272.3.